The primary structure comprises 262 residues: Ribosomal RNA small subunit methyltransferase A (262 aa).

S-adenosyl-L-methionine-binding residues include Asn-12, Leu-14, Gly-38, Glu-60, Asp-83, and Asn-102.

The protein belongs to the class I-like SAM-binding methyltransferase superfamily. rRNA adenine N(6)-methyltransferase family. RsmA subfamily.

Its subcellular location is the cytoplasm. It carries out the reaction adenosine(1518)/adenosine(1519) in 16S rRNA + 4 S-adenosyl-L-methionine = N(6)-dimethyladenosine(1518)/N(6)-dimethyladenosine(1519) in 16S rRNA + 4 S-adenosyl-L-homocysteine + 4 H(+). Its function is as follows. Specifically dimethylates two adjacent adenosines (A1518 and A1519) in the loop of a conserved hairpin near the 3'-end of 16S rRNA in the 30S particle. May play a critical role in biogenesis of 30S subunits. The protein is Ribosomal RNA small subunit methyltransferase A of Pelagibacter ubique (strain HTCC1062).